The primary structure comprises 63 residues: Prokaryotic ubiquitin-like protein Pup 1 (63 aa).

2 stretches are compositionally biased toward basic and acidic residues: residues 1–12 and 24–33; these read MSQEKVQRHGGG and GQERREKLGE. The tract at residues 1 to 35 is disordered; it reads MSQEKVQRHGGGDGEEESGPEAAGQERREKLGEDV. An ARC ATPase binding region spans residues 20–57; sequence PEAAGQERREKLGEDVDAILDEIDDVLEENAEDFVRAY. Residues 25 to 51 are a coiled coil; that stretch reads QERREKLGEDVDAILDEIDDVLEENAE. Gln-63 is modified (deamidated glutamine). Residue Gln-63 forms an Isoglutamyl lysine isopeptide (Gln-Lys) (interchain with K-? in acceptor proteins) linkage.

The protein belongs to the prokaryotic ubiquitin-like protein family. As to quaternary structure, strongly interacts with the proteasome-associated ATPase ARC through a hydrophobic interface; the interacting region of Pup lies in its C-terminal half. There is one Pup binding site per ARC hexamer ring. Is modified by deamidation of its C-terminal glutamine to glutamate by the deamidase Dop, a prerequisite to the subsequent pupylation process.

It functions in the pathway protein degradation; proteasomal Pup-dependent pathway. Protein modifier that is covalently attached to lysine residues of substrate proteins, thereby targeting them for proteasomal degradation. The tagging system is termed pupylation. This chain is Prokaryotic ubiquitin-like protein Pup 1, found in Saccharopolyspora erythraea (strain ATCC 11635 / DSM 40517 / JCM 4748 / NBRC 13426 / NCIMB 8594 / NRRL 2338).